The primary structure comprises 229 residues: MKQLVLIRHGESAWNLENRFTGWADVDLTPKGAEQALAAGENLKKAGYEFDVAYTSVLRRAIRTLWNVQDTMDLMWLPVVHSWRLNERHYGALTGLNKAETAEKYGDEQVHIWRRSYDVRPPLLEHEDERHPKNDPRYSKLNSSDIPLGECLKDNVERVLPLWNESIAPALKAGKRVLLVAHGNSIRSLIKYLDQVSNEDIMEVNVPNGIPLVYELDDDLKPIQHFYLD.

Substrate is bound by residues 8 to 15 (RHGESAWN), 21 to 22 (TG), R60, 87 to 90 (ERHY), K98, 114 to 115 (RR), and 183 to 184 (GN). H9 functions as the Tele-phosphohistidine intermediate in the catalytic mechanism. The Proton donor/acceptor role is filled by E87.

Belongs to the phosphoglycerate mutase family. BPG-dependent PGAM subfamily. As to quaternary structure, homodimer.

It catalyses the reaction (2R)-2-phosphoglycerate = (2R)-3-phosphoglycerate. It functions in the pathway carbohydrate degradation; glycolysis; pyruvate from D-glyceraldehyde 3-phosphate: step 3/5. Catalyzes the interconversion of 2-phosphoglycerate and 3-phosphoglycerate. The sequence is that of 2,3-bisphosphoglycerate-dependent phosphoglycerate mutase from Polynucleobacter necessarius subsp. necessarius (strain STIR1).